Consider the following 192-residue polypeptide: Epididymal-specific lipocalin-12 (192 aa).

A signal peptide spans 1–19 (MRLLCGLWLWLSLLKVLQA). A disulfide bridge links Cys-88 with Cys-192.

The protein belongs to the calycin superfamily. Lipocalin family. Monomer.

It localises to the secreted. Binds all-trans retinoic acid and may act as a retinoid carrier protein within the epididymis. May play a role in male fertility. In Homo sapiens (Human), this protein is Epididymal-specific lipocalin-12 (LCN12).